A 178-amino-acid chain; its full sequence is Protein 105R (178 aa).

The N-terminal stretch at M1–G18 is a signal peptide.

This is Protein 105R from Pantherophis guttatus (Corn snake).